The primary structure comprises 290 residues: 33 kDa chaperonin (290 aa).

Disulfide bonds link C235–C237 and C268–C271.

This sequence belongs to the HSP33 family. Post-translationally, under oxidizing conditions two disulfide bonds are formed involving the reactive cysteines. Under reducing conditions zinc is bound to the reactive cysteines and the protein is inactive.

The protein resides in the cytoplasm. Functionally, redox regulated molecular chaperone. Protects both thermally unfolding and oxidatively damaged proteins from irreversible aggregation. Plays an important role in the bacterial defense system toward oxidative stress. This is 33 kDa chaperonin from Streptococcus mutans serotype c (strain ATCC 700610 / UA159).